The chain runs to 257 residues: Exosome complex component Rrp4 (257 aa).

The 73-residue stretch at 65–137 folds into the S1 motif domain; that stretch reads GDNVLGKIVD…EVNQIDLTTK (73 aa). The KH domain occupies 147–206; it reads RGGQLVTITPSKVPRLIGKGGSMINMIKTLTGTRIIVGQNGWVWVSGKNDELERLAIEAI.

Belongs to the RRP4 family. Component of the archaeal exosome complex. Forms a trimer of Rrp4 and/or Csl4 subunits. The trimer associates with a hexameric ring-like arrangement composed of 3 Rrp41-Rrp42 heterodimers.

Its subcellular location is the cytoplasm. In terms of biological role, non-catalytic component of the exosome, which is a complex involved in RNA degradation. Increases the RNA binding and the efficiency of RNA degradation. Confers strong poly(A) specificity to the exosome. The sequence is that of Exosome complex component Rrp4 from Thermococcus kodakarensis (strain ATCC BAA-918 / JCM 12380 / KOD1) (Pyrococcus kodakaraensis (strain KOD1)).